A 545-amino-acid polypeptide reads, in one-letter code: Chaperonin GroEL (545 aa).

ATP is bound by residues 30 to 33 (TLGP), K51, 87 to 91 (DGTTT), G415, 479 to 481 (NAA), and D495. The disordered stretch occupies residues 526 to 545 (KEDKPDLGGAGGMGGMGGMM). The span at 533–545 (GGAGGMGGMGGMM) shows a compositional bias: gly residues.

It belongs to the chaperonin (HSP60) family. In terms of assembly, forms a cylinder of 14 subunits composed of two heptameric rings stacked back-to-back. Interacts with the co-chaperonin GroES.

It is found in the cytoplasm. It catalyses the reaction ATP + H2O + a folded polypeptide = ADP + phosphate + an unfolded polypeptide.. Together with its co-chaperonin GroES, plays an essential role in assisting protein folding. The GroEL-GroES system forms a nano-cage that allows encapsulation of the non-native substrate proteins and provides a physical environment optimized to promote and accelerate protein folding. The chain is Chaperonin GroEL from Sodalis glossinidius.